The sequence spans 152 residues: Deoxyuridine 5'-triphosphate nucleotidohydrolase (152 aa).

Substrate-binding positions include 71–73 (RSG), N84, 88–90 (LID), and M98.

It belongs to the dUTPase family. The cofactor is Mg(2+).

It catalyses the reaction dUTP + H2O = dUMP + diphosphate + H(+). It participates in pyrimidine metabolism; dUMP biosynthesis; dUMP from dCTP (dUTP route): step 2/2. This enzyme is involved in nucleotide metabolism: it produces dUMP, the immediate precursor of thymidine nucleotides and it decreases the intracellular concentration of dUTP so that uracil cannot be incorporated into DNA. This chain is Deoxyuridine 5'-triphosphate nucleotidohydrolase, found in Shewanella pealeana (strain ATCC 700345 / ANG-SQ1).